Reading from the N-terminus, the 154-residue chain is Transcriptional repressor NrdR (154 aa).

A zinc finger lies at 3–34 (CPYCRHPDSRVVDSREADDGQLIRRRRSCPEC). The ATP-cone domain occupies 46–136 (LAVVKRSGVT…VYRSFESLAD (91 aa)).

Belongs to the NrdR family. Requires Zn(2+) as cofactor.

Negatively regulates transcription of bacterial ribonucleotide reductase nrd genes and operons by binding to NrdR-boxes. This chain is Transcriptional repressor NrdR, found in Salinispora arenicola (strain CNS-205).